The primary structure comprises 284 residues: uncharacterized protein (284 aa).

A signal peptide spans 1-20; the sequence is MLHNIQSILQFLLFVSSVQA. The region spanning 38–121 is the Apple domain; sequence CFEFKKNYWI…FTVNFFRNIC (84 aa). 3 cysteine pairs are disulfide-bonded: C38–C121, C63–C89, and C67–C77. Residue N256 is glycosylated (N-linked (GlcNAc...) asparagine). The chain crosses the membrane as a helical span at residues 264-284; that stretch reads SSTGLKFTTGLLIILVVFLFL.

It localises to the membrane. This is an uncharacterized protein from Caenorhabditis elegans.